A 170-amino-acid polypeptide reads, in one-letter code: Ribosome maturation factor RimM (170 aa).

In terms of domain architecture, PRC barrel spans N97–F170.

Belongs to the RimM family. As to quaternary structure, binds ribosomal protein uS19.

The protein resides in the cytoplasm. In terms of biological role, an accessory protein needed during the final step in the assembly of 30S ribosomal subunit, possibly for assembly of the head region. Essential for efficient processing of 16S rRNA. May be needed both before and after RbfA during the maturation of 16S rRNA. It has affinity for free ribosomal 30S subunits but not for 70S ribosomes. The polypeptide is Ribosome maturation factor RimM (Stenotrophomonas maltophilia (strain R551-3)).